A 126-amino-acid chain; its full sequence is MNLIAQLEAEQIAALGKDIPDFKAGDTVRVGYKVTEGTRTRVQMYEGVVISRKGGGIGASFTVRKISFGEGVERVFPLYSTNIDSITVVRRGRVRRAKLYYLRDRRGKSARIAEVSNYKPKADAKA.

It belongs to the bacterial ribosomal protein bL19 family.

This protein is located at the 30S-50S ribosomal subunit interface and may play a role in the structure and function of the aminoacyl-tRNA binding site. The polypeptide is Large ribosomal subunit protein bL19 (Paracoccus denitrificans (strain Pd 1222)).